Here is a 156-residue protein sequence, read N- to C-terminus: Endoribonuclease YbeY (156 aa).

Positions 122, 126, and 132 each coordinate Zn(2+).

The protein belongs to the endoribonuclease YbeY family. Zn(2+) is required as a cofactor.

The protein localises to the cytoplasm. Its function is as follows. Single strand-specific metallo-endoribonuclease involved in late-stage 70S ribosome quality control and in maturation of the 3' terminus of the 16S rRNA. In Bacillus cereus (strain ZK / E33L), this protein is Endoribonuclease YbeY.